The sequence spans 419 residues: N-acylglucosamine 2-epimerase (419 aa).

A leucine-zipper region spans residues 185–206 (LLNLVEQLGEEDEEMTDKYAEL). A Phosphoserine modification is found at Ser418.

This sequence belongs to the N-acylglucosamine 2-epimerase family. In terms of assembly, homodimer. Forms a heterodimer with renin and inhibits its activity. As to expression, kidney, adrenal gland, brain, lung, spleen, ovary, testis and heart.

It catalyses the reaction an N-acyl-D-glucosamine = an N-acyl-D-mannosamine. The protein operates within amino-sugar metabolism; N-acetylneuraminate degradation. Its function is as follows. Catalyzes the interconversion of N-acetylglucosamine to N-acetylmannosamine. Involved in the N-glycolylneuraminic acid (Neu5Gc) degradation pathway. This is N-acylglucosamine 2-epimerase (Renbp) from Rattus norvegicus (Rat).